A 317-amino-acid chain; its full sequence is CXXC-type zinc finger protein 5 (317 aa).

The segment covering 1-49 has biased composition (low complexity); it reads MSSLSSGPQDTGGSSSSSSNGSSGSGPKAGVADKSAAVAAAAPASVADD. A disordered region spans residues 1–96; that stretch reads MSSLSSGPQD…GSGGGSMMGG (96 aa). The segment covering 83–94 has biased composition (gly residues); that stretch reads GGSGGSGGGSMM. The segment at 251–292 adopts a CXXC-type zinc-finger fold; that stretch reads GKKKRKRCGMCAPCRRRINCEQCSSCRNRKTGHQICKFRKCE. The Nuclear localization signal motif lies at 252-257; sequence KKKRKR. Zn(2+) is bound by residues Cys258, Cys261, Cys264, Cys270, Cys273, Cys276, Cys286, and Cys291.

As to quaternary structure, interacts with DVL1. Interacts with RBPJ.

It is found in the nucleus. The protein resides in the cytoplasm. May indirectly participate in activation of the NF-kappa-B and MAPK pathways. Acts as a mediator of BMP4-mediated modulation of canonical Wnt signaling activity in neural stem cells. Required for DNA damage-induced ATM phosphorylation, p53 activation and cell cycle arrest. Involved in myelopoiesis. Binds to the oxygen responsive element of COX4I2 and represses its transcription under hypoxia conditions (4% oxygen), as well as normoxia conditions (20% oxygen). May repress COX4I2 transactivation induced by CHCHD2 and RBPJ. Binds preferentially to DNA containing cytidine-phosphate-guanosine (CpG) dinucleotides over CpH (H=A, T, and C), hemimethylated-CpG and hemimethylated-hydroxymethyl-CpG. This is CXXC-type zinc finger protein 5 (CXXC5) from Bos taurus (Bovine).